The sequence spans 364 residues: tRNA 2-selenouridine synthase (364 aa).

Residues 14 to 137 (LIADTPIIDV…LRQTTIQATI (124 aa)) form the Rhodanese domain. C97 acts as the S-selanylcysteine intermediate in catalysis.

Belongs to the SelU family. In terms of assembly, monomer.

It catalyses the reaction 5-methylaminomethyl-2-thiouridine(34) in tRNA + selenophosphate + (2E)-geranyl diphosphate + H2O + H(+) = 5-methylaminomethyl-2-selenouridine(34) in tRNA + (2E)-thiogeraniol + phosphate + diphosphate. It carries out the reaction 5-methylaminomethyl-2-thiouridine(34) in tRNA + (2E)-geranyl diphosphate = 5-methylaminomethyl-S-(2E)-geranyl-thiouridine(34) in tRNA + diphosphate. The catalysed reaction is 5-methylaminomethyl-S-(2E)-geranyl-thiouridine(34) in tRNA + selenophosphate + H(+) = 5-methylaminomethyl-2-(Se-phospho)selenouridine(34) in tRNA + (2E)-thiogeraniol. The enzyme catalyses 5-methylaminomethyl-2-(Se-phospho)selenouridine(34) in tRNA + H2O = 5-methylaminomethyl-2-selenouridine(34) in tRNA + phosphate. Functionally, involved in the post-transcriptional modification of the uridine at the wobble position (U34) of tRNA(Lys), tRNA(Glu) and tRNA(Gln). Catalyzes the conversion of 2-thiouridine (S2U-RNA) to 2-selenouridine (Se2U-RNA). Acts in a two-step process involving geranylation of 2-thiouridine (S2U) to S-geranyl-2-thiouridine (geS2U) and subsequent selenation of the latter derivative to 2-selenouridine (Se2U) in the tRNA chain. This Escherichia coli O8 (strain IAI1) protein is tRNA 2-selenouridine synthase.